Consider the following 156-residue polypeptide: Cyanate hydratase (156 aa).

Catalysis depends on residues R96, E99, and S122.

The protein belongs to the cyanase family.

It catalyses the reaction cyanate + hydrogencarbonate + 3 H(+) = NH4(+) + 2 CO2. Catalyzes the reaction of cyanate with bicarbonate to produce ammonia and carbon dioxide. The chain is Cyanate hydratase from Pseudomonas fluorescens (strain ATCC BAA-477 / NRRL B-23932 / Pf-5).